A 1134-amino-acid polypeptide reads, in one-letter code: Sterol regulatory element-binding protein 1 (1134 aa).

The interval 1–60 (MDELAFGEAALEQTLAEMCELDTAVLNDIEDMLQLINNQDSDFPGLFDAPYAGGETGDTG) is transcriptional activation (acidic). The Cytoplasmic portion of the chain corresponds to 1-477 (MDELAFGEAA…HSRGMLDRSR (477 aa)). The 9aaTAD signature appears at 27–35 (NDIEDMLQL). The tract at residues 46–73 (LFDAPYAGGETGDTGPSSPGANSPESFS) is disordered. The segment covering 59-69 (TGPSSPGANSP) has biased composition (polar residues). Ser96 and Ser115 each carry phosphoserine. Disordered regions lie at residues 130–149 (LQPA…SFPA) and 170–195 (SGTL…VLPT). Positions 170–179 (SGTLPGNTQQ) are enriched in polar residues. Residues 227 to 487 (QQVPVVLQPH…LALCVLAFLC (261 aa)) are interaction with LMNA. A bHLH domain is found at 317–367 (EKRTAHNAIEKRYRSSINDKIVELKDLVVGTEAKLNKSAVLRKAIDYIRFL). Phosphoserine; by SIK1 occurs at positions 331 and 332. Positions 367–388 (LQHSNQKLKQENLTLRSAHKSK) are leucine-zipper. A Phosphoserine; by AMPK modification is found at Ser389. Ser395 carries the post-translational modification Phosphoserine; by SIK1. Positions 415–468 (VETLTPPPSDAGSPSQSSPLSFGSRASSSGGSDSEPDSPAFEDSQVKAQRLPSH) are disordered. Positions 424-453 (DAGSPSQSSPLSFGSRASSSGGSDSEPDSP) are enriched in low complexity. At Ser448 the chain carries Phosphoserine. The chain crosses the membrane as a helical span at residues 478–498 (LALCVLAFLCLTCNPLASLFG). The Lumenal portion of the chain corresponds to 499–536 (WGILTPSDATGTHRSSGRSMLEAESRDGSNWTQWLLPP). The helical transmembrane segment at 537–557 (LVWLANGLLVLACLALLFVYG) threads the bilayer. Over 558-1134 (EPVTRPHSGP…LGGGTTVTSS (577 aa)) the chain is Cytoplasmic. Ser1047 bears the Phosphoserine mark.

This sequence belongs to the SREBP family. In terms of assembly, forms a tight complex with SCAP, the SCAP-SREBP complex, in the endoplasmic reticulum membrane and the Golgi apparatus. Interacts with PAQR3; the interaction anchors the SCAP-SREBP complex to the Golgi apparatus in low cholesterol conditions. As to quaternary structure, efficient DNA binding of the soluble transcription factor fragment requires dimerization with another bHLH protein. Interacts with CEBPA, the interaction produces a transcriptional synergy. Interacts with LMNA. Post-translationally, processed in the Golgi apparatus, releasing the protein from the membrane. At low cholesterol the SCAP-SREBP complex is recruited into COPII vesicles for export from the endoplasmic reticulum. In the Golgi, complex SREBPs are cleaved sequentially by site-1 (MBTPS1, S1P) and site-2 (MBTPS2, S2P) proteases. The first cleavage by site-1 protease occurs within the luminal loop, the second cleavage by site-2 protease occurs within the first transmembrane domain, releasing the transcription factor from the Golgi membrane. Phosphorylated by AMPK, leading to suppress protein processing and nuclear translocation, and repress target gene expression. Phosphorylation at Ser-389 by SIK1 represses activity possibly by inhibiting DNA-binding. In terms of processing, SCAP-free SREBF1 is ubiquitinated by the BCR(ARMC5) complex, leading to its degradation. Post-translationally, ubiquitinated; the nuclear form has a rapid turnover and is rapidly ubiquitinated and degraded by the proteasome in the nucleus. As to expression, predominant isoform expressed in most tissues. Predominates in liver, adrenal gland, brain and adipose tissue. Also found in kidney, thymus, testis, muscle, jejunum, and ileum. Expressed only in select tissues, such as intestinal epithelial, heart, macrophage and bone marrow dendritic cells. Also found in kidney, thymus, testis, muscle, jejunum, and ileum.

The protein resides in the endoplasmic reticulum membrane. Its subcellular location is the golgi apparatus membrane. The protein localises to the cytoplasmic vesicle. It localises to the COPII-coated vesicle membrane. It is found in the nucleus. Its activity is regulated as follows. Activation by cleavage is down-regulated upon activation of SIRT3-dependent PRKAA1/AMPK-alpha signaling cascade which leads to inhibition of ATP-consuming lipogenesis to restore cellular energy balance. Its function is as follows. Precursor of the transcription factor form (Processed sterol regulatory element-binding protein 1), which is embedded in the endoplasmic reticulum membrane. Low sterol concentrations promote processing of this form, releasing the transcription factor form that translocates into the nucleus and activates transcription of genes involved in cholesterol biosynthesis and lipid homeostasis. In terms of biological role, key transcription factor that regulates expression of genes involved in cholesterol biosynthesis and lipid homeostasis. Binds to the sterol regulatory element 1 (SRE-1) (5'-ATCACCCCAC-3'). Has dual sequence specificity binding to both an E-box motif (5'-ATCACGTGA-3') and to SRE-1 (5'-ATCACCCCAC-3'). Regulates the promoters of genes involved in cholesterol biosynthesis and the LDL receptor (LDLR) pathway of sterol regulation. Isoform expressed only in select tissues, which has higher transcriptional activity compared to SREBP-1C. Able to stimulate both lipogenic and cholesterogenic gene expression. Has a role in the nutritional regulation of fatty acids and triglycerides in lipogenic organs such as the liver. Required for innate immune response in macrophages by regulating lipid metabolism. Functionally, predominant isoform expressed in most tissues, which has weaker transcriptional activity compared to isoform SREBP-1A. Primarily controls expression of lipogenic gene. Strongly activates global lipid synthesis in rapidly growing cells. The protein is Sterol regulatory element-binding protein 1 of Mus musculus (Mouse).